Here is a 313-residue protein sequence, read N- to C-terminus: 3'-5' exoribonuclease YhaM (313 aa).

The segment at residues 22 to 90 (SSVKGTASNG…QLKIRQIRQA (69 aa)) is a DNA-binding region (OB). The region spanning 163 to 279 (HVVSMLRLAK…LHQIDLMDAS (117 aa)) is the HD domain.

The protein belongs to the YhaM family.

Shows a 3'-5' exoribonuclease activity. In Listeria monocytogenes serovar 1/2a (strain ATCC BAA-679 / EGD-e), this protein is 3'-5' exoribonuclease YhaM.